A 339-amino-acid polypeptide reads, in one-letter code: D-glycero-alpha-D-manno-heptose 7-phosphate kinase (339 aa).

17 to 20 contributes to the substrate binding site; sequence GGTD. ATP-binding positions include serine 57 and 110–116; that span reads GSGLGGS. Residues serine 116 and glutamate 148 each contribute to the Mg(2+) site. The Proton acceptor role is filled by aspartate 160.

The protein belongs to the GHMP kinase family.

It catalyses the reaction D-glycero-alpha-D-manno-heptose 7-phosphate + ATP = D-glycero-alpha-D-manno-heptose 1,7-bisphosphate + ADP + H(+). Its pathway is nucleotide-sugar biosynthesis; GDP-D-glycero-alpha-D-manno-heptose biosynthesis; GDP-D-glycero-alpha-D-manno-heptose from D-glycero-alpha-D-manno-heptose 7-phosphate: step 1/3. It participates in capsule biogenesis; capsule polysaccharide biosynthesis. Functionally, catalyzes the phosphorylation of D-glycero-alpha-D-manno-heptose 7-phosphate at the C-1 position to form D-glycero-alpha-D-manno-heptose 1,7-bisphosphate. This chain is D-glycero-alpha-D-manno-heptose 7-phosphate kinase, found in Campylobacter jejuni subsp. jejuni serotype O:2 (strain ATCC 700819 / NCTC 11168).